The primary structure comprises 352 residues: MVFRIASSPYTHNQRQTSRIMLLVLLAAVPGIAAQLWFFGWGTLVQILLASVSALLAEALVLKLRKQSVAATLKDNSALLTGLLLAVSIPPLAPWWMVVLGTVFAVIIAKQLYGGLGQNPFNPAMIGYVVLLISFPVQMTSWLPPHEIAVNIPGFIDAIQVIFSGHTTSGGDMNTLRLGIDGISQATPLDTFKTSVRAGHSVEEIMQYPIYSGILAGAGWQWVNLAWLAGGVWLLWQKAIRWHIPLSFLVTLALCATLGWLFSPDTLAAPQIHLLSGATMLGAFFILTDPVTASTTNRGRLIFGALAGLLVWMIRSFGGYPDGVAFAVLLANITVPLIDYYTRPRVYGHRKG.

4 helical membrane-spanning segments follow: residues 20–40 (IMLL…WFFG), 42–62 (GTLV…ALVL), 89–109 (IPPL…VIIA), and 123–143 (PAMI…TSWL). Position 187 is an FMN phosphoryl threonine (threonine 187). 5 consecutive transmembrane segments (helical) span residues 214–234 (ILAG…GVWL), 242–262 (WHIP…GWLF), 267–287 (LAAP…FFIL), 301–321 (LIFG…GGYP), and 322–342 (DGVA…DYYT).

The protein belongs to the NqrB/RnfD family. As to quaternary structure, the complex is composed of six subunits: RsxA, RsxB, RsxC, RsxD, RsxE and RsxG. It depends on FMN as a cofactor.

The protein localises to the cell inner membrane. Part of a membrane-bound complex that couples electron transfer with translocation of ions across the membrane. Required to maintain the reduced state of SoxR. The chain is Ion-translocating oxidoreductase complex subunit D from Escherichia coli O81 (strain ED1a).